The sequence spans 147 residues: uncharacterized protein (147 aa).

This is an uncharacterized protein from Bacillus subtilis (strain 168).